Here is a 229-residue protein sequence, read N- to C-terminus: Cytidylate kinase (229 aa).

Residue 12–20 coordinates ATP; sequence GPSGAGKGT.

The protein belongs to the cytidylate kinase family. Type 1 subfamily.

The protein localises to the cytoplasm. The catalysed reaction is CMP + ATP = CDP + ADP. It catalyses the reaction dCMP + ATP = dCDP + ADP. This chain is Cytidylate kinase, found in Pseudomonas aeruginosa (strain LESB58).